Here is a 329-residue protein sequence, read N- to C-terminus: MARFSLVVVVTLSLAISMFPDTTTAQLKTNFYGNSCPNVEQIVKKVVQEKIKQTFVTIPATLRLFFHDCFVNGCDASVMIQSTPTNKAEKDHPDNISLAGDGFDVVIKAKKALDAIPSCKNKVSCADILALATRDVVVAAKGPSYAVELGRFDGLVSTAASVNGNLPGPNNKVTELNKLFAKNKLTQEDMIALSAAHTLGFAHCGKVFNRIYNFNLTHAVDPTLNKAYAKELQLACPKTVDPRIAINMDPTTPRQFDNIYFKNLQQGKGLFTSDQVLFTDGRSKPTVNDWAKNSVAFNKAFVTAMTKLGRVGVKTRRNGNIRRDCGAFN.

An N-terminal signal peptide occupies residues 1–25 (MARFSLVVVVTLSLAISMFPDTTTA). Disulfide bonds link C36–C119, C69–C74, C125–C325, and C204–C236. The Proton acceptor role is filled by H67. 5 residues coordinate Ca(2+): D68, V71, G73, D75, and S77. Position 167 (P167) interacts with substrate. H197 serves as a coordination point for heme b. Position 198 (T198) interacts with Ca(2+). N-linked (GlcNAc...) asparagine glycosylation occurs at N215. Ca(2+) is bound by residues D249, T252, and D257.

It belongs to the peroxidase family. Classical plant (class III) peroxidase subfamily. The cofactor is heme b. Requires Ca(2+) as cofactor. Expressed in the whole plant, with the highest expression in roots.

It localises to the secreted. It carries out the reaction 2 a phenolic donor + H2O2 = 2 a phenolic radical donor + 2 H2O. Removal of H(2)O(2), oxidation of toxic reductants, biosynthesis and degradation of lignin, suberization, auxin catabolism, response to environmental stresses such as wounding, pathogen attack and oxidative stress. These functions might be dependent on each isozyme/isoform in each plant tissue. The chain is Peroxidase 73 (PER73) from Arabidopsis thaliana (Mouse-ear cress).